The sequence spans 147 residues: UPF0208 membrane protein SO_2914 (147 aa).

The next 2 helical transmembrane spans lie at 40 to 60 and 68 to 88; these read LAILVMPVLAVLASVSQLYTY and ALTIALFFISLPLQGLLWLGW.

The protein belongs to the UPF0208 family.

The protein localises to the cell inner membrane. The polypeptide is UPF0208 membrane protein SO_2914 (Shewanella oneidensis (strain ATCC 700550 / JCM 31522 / CIP 106686 / LMG 19005 / NCIMB 14063 / MR-1)).